Consider the following 101-residue polypeptide: Integration host factor subunit alpha (101 aa).

The disordered stretch occupies residues 49-70 (FGNFQLRDKPQRPGRNPKTGEE).

The protein belongs to the bacterial histone-like protein family. In terms of assembly, heterodimer of an alpha and a beta chain.

This protein is one of the two subunits of integration host factor, a specific DNA-binding protein that functions in genetic recombination as well as in transcriptional and translational control. This chain is Integration host factor subunit alpha, found in Nitrosospira multiformis (strain ATCC 25196 / NCIMB 11849 / C 71).